Here is a 56-residue protein sequence, read N- to C-terminus: Potassium channel toxin alpha-KTx 9.8 (56 aa).

Positions 1–19 are cleaved as a signal peptide; sequence MSRLFTLVLIVLAMNVMMA. A propeptide spanning residues 20-28 is cleaved from the precursor; that stretch reads IISDPVVEA. 3 disulfides stabilise this stretch: C31/C47, C34/C52, and C38/C54.

Belongs to the short scorpion toxin superfamily. Potassium channel inhibitor family. Alpha-KTx 09 subfamily. In terms of tissue distribution, expressed by the venom gland.

Its subcellular location is the secreted. Its function is as follows. Potassium channel inhibitor. The polypeptide is Potassium channel toxin alpha-KTx 9.8 (Buthus israelis (Israeli scorpion)).